The chain runs to 678 residues: Glycine--tRNA ligase beta subunit (678 aa).

Belongs to the class-II aminoacyl-tRNA synthetase family. As to quaternary structure, tetramer of two alpha and two beta subunits.

The protein resides in the cytoplasm. The catalysed reaction is tRNA(Gly) + glycine + ATP = glycyl-tRNA(Gly) + AMP + diphosphate. The sequence is that of Glycine--tRNA ligase beta subunit from Streptococcus pneumoniae (strain Hungary19A-6).